A 519-amino-acid chain; its full sequence is Protein disulfide-isomerase A5 (519 aa).

Positions 1–21 (MARAGPAWLLLAIWVVLPSWL) are cleaved as a signal peptide. Disulfide bonds link Cys-85-Cys-94, Cys-182-Cys-185, Cys-305-Cys-308, and Cys-426-Cys-429. 3 Thioredoxin domains span residues 134–261 (FLKD…NPQP), 270–384 (PWAD…NPEA), and 378–506 (WMQN…ALRE). A Prevents secretion from ER motif is present at residues 516 to 519 (KEEL).

The protein belongs to the protein disulfide isomerase family. As to quaternary structure, interacts with CALR (via P-domain).

It is found in the endoplasmic reticulum lumen. The catalysed reaction is Catalyzes the rearrangement of -S-S- bonds in proteins.. This chain is Protein disulfide-isomerase A5 (PDIA5), found in Homo sapiens (Human).